Consider the following 338-residue polypeptide: HLA class I histocompatibility antigen, alpha chain G (338 aa).

Positions 1 to 24 (MVVMAPRTLFLLLSGALTLTETWA) are cleaved as a signal peptide. The segment at 3 to 11 (VMAPRTLFL) is VL9 epitope. The interval 25-114 (GSHSMRYFSA…LRGYYNQSEA (90 aa)) is alpha-1. Residues 25–308 (GSHSMRYFSA…KQSSLPTIPI (284 aa)) lie on the Extracellular side of the membrane. A peptide antigen contacts are provided by tyrosine 31, histidine 94, asparagine 101, and tyrosine 108. Asparagine 110 is a glycosylation site (N-linked (GlcNAc...) asparagine). The tract at residues 115-206 (SSHTLQWMIG…ENGKEMLQRA (92 aa)) is alpha-2. Cysteine 125 and cysteine 188 are oxidised to a cystine. Residues serine 167, lysine 170, glutamine 179, arginine 180, tyrosine 183, and tyrosine 195 each contribute to the a peptide antigen site. An alpha-3 region spans residues 207–298 (DPPKTHVTHH…GLPEPLMLRW (92 aa)). One can recognise an Ig-like C1-type domain in the interval 209-299 (PKTHVTHHPV…LPEPLMLRWK (91 aa)). Cysteine 227 and cysteine 283 are oxidised to a cystine. Positions 299–308 (KQSSLPTIPI) are connecting peptide. Residues 309–332 (MGIVAGLVVLAAVVTGAAVAAVLW) traverse the membrane as a helical segment. The Cytoplasmic portion of the chain corresponds to 333-338 (RKKSSD). An ER-retrieval signal motif is present at residues 334–336 (KKS).

Belongs to the MHC class I family. Forms a heterotrimer with B2M and a self-peptide (peptide-bound HLA-G-B2M). HLA-G-B2M complex interacts with components of the antigen processing machinery TAPBP and TAP1-TAP2 complex; this interaction is required for loading of high affinity peptides and heterotrimer translocation to the cell surface. Interacts with CALCR; this interaction is required for appropriate folding. Interacts with COPB1; this interaction mediates the endoplasmic reticulum (ER) retrieval of HLA-G-B2M complexes that bind low affinity peptides. On the cell surface, peptide-bound HLA-G-B2M molecules (referred to as monomers) can form disulfide-linked homomultimers, homodimers and homotrimers. Interacts with KIR2DL4; this interaction is direct. Interacts with LILRB1 and LILRB2 receptors; this interaction is direct. Interacts with CD160; this interactions is direct. Interacts with CD8A homodimer; this interaction is direct and might down-regulate T cell receptor signaling. Isoform 2: Forms a non-disulfide-linked homodimer and interacts with LILRB2. Post-translationally, N-glycosylated. In terms of processing, produced by proteolytic cleavage at the cell surface (shedding) by matrix metalloproteinase MMP2. Expressed in adult eye. Expressed in immune cell subsets including monocytes, myeloid and plasmacytoid dendritic cells and regulatory T cells (Tr1)(at protein level). Secreted by follicular dendritic cell and follicular helper T cells. In terms of tissue distribution, detected in physiological fluids including amniotic fluid and serum. As to expression, expressed in placenta, amniotic membrane, skin, cord blood and peripheral blood mononuclear cells.

The protein resides in the cell membrane. It is found in the endoplasmic reticulum membrane. Its subcellular location is the early endosome membrane. It localises to the secreted. The protein localises to the early endosome. The protein resides in the cell projection. It is found in the filopodium membrane. Functionally, non-classical major histocompatibility class Ib molecule involved in immune regulatory processes at the maternal-fetal interface. In complex with B2M/beta-2 microglobulin binds a limited repertoire of nonamer self-peptides derived from intracellular proteins including histones and ribosomal proteins. Peptide-bound HLA-G-B2M complex acts as a ligand for inhibitory/activating KIR2DL4, LILRB1 and LILRB2 receptors on uterine immune cells to promote fetal development while maintaining maternal-fetal tolerance. Upon interaction with KIR2DL4 and LILRB1 receptors on decidual NK cells, it triggers NK cell senescence-associated secretory phenotype as a molecular switch to promote vascular remodeling and fetal growth in early pregnancy. Through interaction with KIR2DL4 receptor on decidual macrophages induces pro-inflammatory cytokine production mainly associated with tissue remodeling. Through interaction with LILRB2 receptor triggers differentiation of type 1 regulatory T cells and myeloid-derived suppressor cells, both of which actively maintain maternal-fetal tolerance. May play a role in balancing tolerance and antiviral-immunity at maternal-fetal interface by keeping in check the effector functions of NK, CD8+ T cells and B cells. Reprograms B cells toward an immune suppressive phenotype via LILRB1. May induce immune activation/suppression via intercellular membrane transfer (trogocytosis), likely enabling interaction with KIR2DL4, which resides mostly in endosomes. Through interaction with the inhibitory receptor CD160 on endothelial cells may control angiogenesis in immune privileged sites. Likely does not bind B2M and presents peptides. Negatively regulates NK cell- and CD8+ T cell-mediated cytotoxicity. In terms of biological role, non-classical major histocompatibility class Ib molecule involved in immune regulatory processes at the maternal-fetal interface. In complex with B2M/beta-2 microglobulin binds a limited repertoire of nonamer self-peptides derived from intracellular proteins including histones and ribosomal proteins. Peptide-bound HLA-G-B2M complex acts as a ligand for inhibitory/activating KIR2DL4, LILRB1 and LILRB2 receptors on uterine immune cells to promote fetal development while maintaining maternal-fetal tolerance. Upon interaction with KIR2DL4 and LILRB1 receptors on decidual NK cells, it triggers NK cell senescence-associated secretory phenotype as a molecular switch to promote vascular remodeling and fetal growth in early pregnancy. Through interaction with KIR2DL4 receptor on decidual macrophages induces pro-inflammatory cytokine production mainly associated with tissue remodeling. Through interaction with LILRB2 receptor triggers differentiation of type 1 regulatory T cells and myeloid-derived suppressor cells, both of which actively maintain maternal-fetal tolerance. Reprograms B cells toward an immune suppressive phenotype via LILRB1. Its function is as follows. Likely does not bind B2M and presents peptides. The polypeptide is HLA class I histocompatibility antigen, alpha chain G (Homo sapiens (Human)).